A 211-amino-acid polypeptide reads, in one-letter code: Large ribosomal subunit protein uL3 (211 aa).

The disordered stretch occupies residues 130–154; it reads RGPMAHGSKFHRHQGSNGSATTPGR.

This sequence belongs to the universal ribosomal protein uL3 family. In terms of assembly, part of the 50S ribosomal subunit. Forms a cluster with proteins L14 and L19.

One of the primary rRNA binding proteins, it binds directly near the 3'-end of the 23S rRNA, where it nucleates assembly of the 50S subunit. In Lachnospira eligens (strain ATCC 27750 / DSM 3376 / VPI C15-48 / C15-B4) (Eubacterium eligens), this protein is Large ribosomal subunit protein uL3.